The following is a 429-amino-acid chain: Ribosomal RNA small subunit methyltransferase B (429 aa).

Residues 254 to 260 (CAAPGGK), Asp-277, Asp-303, and Asp-322 each bind S-adenosyl-L-methionine. Cys-375 acts as the Nucleophile in catalysis.

Belongs to the class I-like SAM-binding methyltransferase superfamily. RsmB/NOP family.

Its subcellular location is the cytoplasm. The enzyme catalyses cytidine(967) in 16S rRNA + S-adenosyl-L-methionine = 5-methylcytidine(967) in 16S rRNA + S-adenosyl-L-homocysteine + H(+). Specifically methylates the cytosine at position 967 (m5C967) of 16S rRNA. This is Ribosomal RNA small subunit methyltransferase B from Shigella flexneri serotype 5b (strain 8401).